We begin with the raw amino-acid sequence, 321 residues long: N-acetyllactosaminide alpha-1,3-galactosyltransferase-like 1 (321 aa).

Residues 1–6 (MQYKKE) lie on the Cytoplasmic side of the membrane. A helical; Signal-anchor for type II membrane protein membrane pass occupies residues 7-24 (TLLLILLAILLALTQRYS). The Lumenal segment spans residues 25–321 (RTKDHLQKMY…IKVAWQPRIT (297 aa)). Residues N87 and N99 are each glycosylated (N-linked (GlcNAc...) asparagine). Residues 95–100 (FATGNF), 187–189 (TAN), and 209–212 (HAWW) contribute to the substrate site. E277 serves as the catalytic Nucleophile.

It belongs to the glycosyltransferase 6 family. Mn(2+) is required as a cofactor.

It localises to the golgi apparatus. The protein resides in the golgi stack membrane. The catalysed reaction is a beta-D-galactosyl-(1-&gt;4)-N-acetyl-beta-D-glucosaminyl derivative + UDP-alpha-D-galactose = an alpha-D-galactosyl-(1-&gt;3)-beta-D-galactosyl-(1-&gt;4)-N-acetyl-beta-D-glucosaminyl derivative + UDP + H(+). It participates in protein modification; protein glycosylation. Its function is as follows. Synthesizes the galactose-alpha(1,3)-galactose group by catalyzing the transfer of a galactose residue, with an alpha-1,3 linkage, on terminal lactosaminide (Gal-beta-1,4-GlcNAc-R) disaccharide borne by a glycoprotein or a glycolipid. The sequence is that of N-acetyllactosaminide alpha-1,3-galactosyltransferase-like 1 (Ggta1l1) from Rattus norvegicus (Rat).